Here is a 68-residue protein sequence, read N- to C-terminus: Urocalcin (68 aa).

The signal sequence occupies residues 1–27 (MKASTLVVIFIVIFITISSFSIHDVQA). Positions 28 to 35 (SGVEKREQ) are excised as a propeptide. Cystine bridges form between cysteine 38/cysteine 52, cysteine 45/cysteine 56, and cysteine 51/cysteine 67. Residues 57-59 (KRR) are essential for stimulation of [3H]ryanodine binding to RYR1.

Belongs to the scorpion calcin family. Expressed by the venom gland.

It localises to the secreted. This toxin only weakly stabilizes ryanodine receptor 1 (RyR1) opening in a long-lasting subconductance state (55% of the full conductance state obtained only at high concentrations (1 uM)). In addition, it has been shown to dose-dependently stimulate ryanodine binding to RyR1 with the lowest activity of all calcins (EC(50)=376 nM). It also augments the bell-shaped calcium-[3H]ryanodine binding curve that is maximal at about 10 uM calcium concentration. It binds a different site as ryanodine. It acts synergistically with caffeine. In contrast to other calcins, it does not trigger calcium release from sarcoplasmic vesicles even at high concentration (1 uM). In vivo, intracerebroventricular injection into mice induces neurotoxic symptoms, followed by death. The chain is Urocalcin from Urodacus yaschenkoi (Inland robust scorpion).